A 1117-amino-acid polypeptide reads, in one-letter code: DNA polymerase (1117 aa).

Residues 591–621 form a disordered region; that stretch reads ESSPVASFEEDSEQTSDSSLGEVSSQGSSDG. Positions 606-618 are enriched in low complexity; that stretch reads SDSSLGEVSSQGS.

It belongs to the DNA polymerase type-B family.

It localises to the host nucleus. The catalysed reaction is DNA(n) + a 2'-deoxyribonucleoside 5'-triphosphate = DNA(n+1) + diphosphate. The chain is DNA polymerase from Cavia porcellus (Guinea pig).